The following is a 538-amino-acid chain: MKFKTFSKSAVLLTASLAVLAACGSKNTASSPDYKLEGVTFPLQEKKTLKFMTASSPLSPKDPNEKLILQRLEKETGVHIDWTNYQSDFAEKRNLDISSGDLPDAIHNDGASDVDLMNWAKKGVIIPVEDLIDKYMPNLKKILDEKPEYKALMTAPDGHIYSFPWIEELGDGKESIHSVNDMAWINKDWLKKLGLEMPKTTDDLIKVLEAFKNGDPNGNGEADEIPFSFISGNGNEDFKFLFAAFGIGDNDDHLVVGNDGKVDFTADNDNYKEGVKFIRQLQEKGLIDKEAFEHDWNSYIAKGHDQKFGVYFTWDKNNVTGSNESYDVLPVLAGPSGQKHVARTNGMGFARDKMVITSVNKNLELTAKWIDAQYAPLQSVQNNWGTYGDDKQQNIFELDQASNSLKHLPLNGTAPAELRQKTEVGGPLAILDSYYGKVTTMPDDAKWRLDLIKEYYVPYMSNVNNYPRVFMTQEDLDKIAHIEADMNDYIYRKRAEWIVNGNIDTEWDDYKKELEKYGLSDYLAIKQKYYDQYQANKN.

The signal sequence occupies residues Met-1–Ala-22. A lipid anchor (N-palmitoyl cysteine) is attached at Cys-23. A lipid anchor (S-diacylglycerol cysteine) is attached at Cys-23. Glu-167 serves as a coordination point for substrate. Ca(2+) contacts are provided by Asp-215, Asn-217, Asn-219, Glu-221, Asp-223, and Glu-224. Residue Asn-235 coordinates substrate. Ca(2+)-binding residues include Asp-263, Phe-264, Asp-267, and Asn-268. Residues Trp-314, Asn-318, Lys-353, Trp-384, Arg-419, and Glu-423 each contribute to the substrate site.

Belongs to the bacterial solute-binding protein 1 family. In terms of assembly, the complex is composed of two ATP-binding proteins (MsmK), two transmembrane proteins (FusB and FusC) and a solute-binding protein (FusA).

Its subcellular location is the cell membrane. In terms of biological role, part of the ABC transporter complex FusABC-MsmK involved in short- and long-chain fructooligosaccharide (FOS) import. Required for the utilization of long-chain FOSs. Binds kestose, nystose, fructofuranosyl-nystose and inulin, but not sucrose. Has a preference for long-chain FOSs (tetrasaccharides and larger). This is Fructooligosaccharide ABC transporter substrate-binding protein FusA from Streptococcus pneumoniae serotype 4 (strain ATCC BAA-334 / TIGR4).